The chain runs to 343 residues: uncharacterized protein (343 aa).

This is an uncharacterized protein from Nostoc sp. (strain PCC 7120 / SAG 25.82 / UTEX 2576).